The sequence spans 132 residues: Fatty acid-binding protein, intestinal (132 aa).

Ala-2 bears the N-acetylalanine mark. Positions 83 and 107 each coordinate hexadecanoate. Tetradecanoate is bound by residues Trp-83 and Arg-107.

The protein belongs to the calycin superfamily. Fatty-acid binding protein (FABP) family.

Its subcellular location is the cytoplasm. FABPs are thought to play a role in the intracellular transport of long-chain fatty acids and their acyl-CoA esters. This chain is Fatty acid-binding protein, intestinal (fabp2), found in Xenopus laevis (African clawed frog).